The sequence spans 147 residues: Sentan (147 aa).

The segment at 14–34 (RLEGEPNPPAAPTSTLAPKNM) is disordered. Over residues 25–34 (PTSTLAPKNM) the composition is skewed to polar residues.

Belongs to the S-100 family.

The protein resides in the cell projection. The protein localises to the cilium. Functionally, may be a component of the linker structure that bridges the ciliary membrane and peripheral singlet microtubules. This Bos taurus (Bovine) protein is Sentan (SNTN).